We begin with the raw amino-acid sequence, 336 residues long: tRNA N6-adenosine threonylcarbamoyltransferase (336 aa).

Fe cation-binding residues include H114 and H118. Residues 136 to 140 (LVSGG), D169, G182, D186, and N275 each bind substrate. Residue D301 participates in Fe cation binding.

It belongs to the KAE1 / TsaD family. The cofactor is Fe(2+).

Its subcellular location is the cytoplasm. It catalyses the reaction L-threonylcarbamoyladenylate + adenosine(37) in tRNA = N(6)-L-threonylcarbamoyladenosine(37) in tRNA + AMP + H(+). In terms of biological role, required for the formation of a threonylcarbamoyl group on adenosine at position 37 (t(6)A37) in tRNAs that read codons beginning with adenine. Is involved in the transfer of the threonylcarbamoyl moiety of threonylcarbamoyl-AMP (TC-AMP) to the N6 group of A37, together with TsaE and TsaB. TsaD likely plays a direct catalytic role in this reaction. In Streptococcus pneumoniae serotype 4 (strain ATCC BAA-334 / TIGR4), this protein is tRNA N6-adenosine threonylcarbamoyltransferase.